Reading from the N-terminus, the 139-residue chain is ATP synthase epsilon chain (139 aa).

Belongs to the ATPase epsilon chain family. As to quaternary structure, F-type ATPases have 2 components, CF(1) - the catalytic core - and CF(0) - the membrane proton channel. CF(1) has five subunits: alpha(3), beta(3), gamma(1), delta(1), epsilon(1). CF(0) has three main subunits: a, b and c.

Its subcellular location is the cell inner membrane. In terms of biological role, produces ATP from ADP in the presence of a proton gradient across the membrane. In Escherichia coli O157:H7, this protein is ATP synthase epsilon chain (atpC).